We begin with the raw amino-acid sequence, 95 residues long: Acylphosphatase (95 aa).

One can recognise an Acylphosphatase-like domain in the interval 6–94 (RVRVIVKGIV…EDFTGFSVRY (89 aa)). Catalysis depends on residues Arg21 and Asn39.

The protein belongs to the acylphosphatase family.

The enzyme catalyses an acyl phosphate + H2O = a carboxylate + phosphate + H(+). This is Acylphosphatase (acyP) from Caldivirga maquilingensis (strain ATCC 700844 / DSM 13496 / JCM 10307 / IC-167).